The chain runs to 485 residues: Glutamate--tRNA ligase (485 aa).

The 'HIGH' region signature appears at 11–21; that stretch reads PSPTGHLHIGN. Positions 252 to 256 match the 'KMSKS' region motif; sequence KLSKR. Lys-255 is an ATP binding site.

It belongs to the class-I aminoacyl-tRNA synthetase family. Glutamate--tRNA ligase type 1 subfamily. As to quaternary structure, monomer.

The protein resides in the cytoplasm. The enzyme catalyses tRNA(Glu) + L-glutamate + ATP = L-glutamyl-tRNA(Glu) + AMP + diphosphate. In terms of biological role, catalyzes the attachment of glutamate to tRNA(Glu) in a two-step reaction: glutamate is first activated by ATP to form Glu-AMP and then transferred to the acceptor end of tRNA(Glu). The polypeptide is Glutamate--tRNA ligase (Bacillus mycoides (strain KBAB4) (Bacillus weihenstephanensis)).